Here is a 688-residue protein sequence, read N- to C-terminus: Homoaconitase, mitochondrial (688 aa).

Positions 335, 395, and 398 each coordinate [4Fe-4S] cluster. The tract at residues 468–494 (SIDLPKSSGNTGATSEEPISEDDTSEA) is disordered.

The protein belongs to the aconitase/IPM isomerase family. [4Fe-4S] cluster serves as cofactor.

It localises to the mitochondrion. It carries out the reaction (2R,3S)-homoisocitrate = cis-homoaconitate + H2O. The protein operates within amino-acid biosynthesis; L-lysine biosynthesis via AAA pathway; L-alpha-aminoadipate from 2-oxoglutarate: step 3/5. Functionally, catalyzes the reversible hydration of cis-homoaconitate to (2R,3S)-homoisocitrate, a step in the alpha-aminoadipate pathway for lysine biosynthesis. This is Homoaconitase, mitochondrial (LYS4) from Candida parapsilosis (Yeast).